We begin with the raw amino-acid sequence, 37 residues long: Large ribosomal subunit protein bL36 (37 aa).

Belongs to the bacterial ribosomal protein bL36 family.

The sequence is that of Large ribosomal subunit protein bL36 from Leptospira interrogans serogroup Icterohaemorrhagiae serovar Lai (strain 56601).